The primary structure comprises 117 residues: Large ribosomal subunit protein bL20 (117 aa).

Belongs to the bacterial ribosomal protein bL20 family.

Its function is as follows. Binds directly to 23S ribosomal RNA and is necessary for the in vitro assembly process of the 50S ribosomal subunit. It is not involved in the protein synthesizing functions of that subunit. The sequence is that of Large ribosomal subunit protein bL20 from Vibrio campbellii (strain ATCC BAA-1116).